The chain runs to 354 residues: MTELKNDRYLRALLRQPVDVTPVWMMRQAGRYLPEYKATRAQAGDFMSLCKNAELACEVTLQPLRRYPLDAAILFSDILTIPDAMGLGLYFEAGEGPRFTAPVTCKADVDKLPIPDPEDELGYVMNAVRTIRRELKGEVPLIGFSGSPWTLATYMVEGGSSKAFTVIKKMMYADPQALHLLLDKLAKSVTLYLNAQIKAGAQSVMIFDTWGGVLTGRDYQQFSLYYMHKIVDGLLRENDGRRVPVTLFTKGGGQWLEAMAETGCDALGLDWTTDIADARRRVGHKVALQGNMDPSMLYAPPARIEDEVATILAGFGQGEGHVFNLGHGIHQDVPPEHAGAFVEAVHRLSAQYHN.

Residues 27–31 (RQAGR), Phe46, Asp77, Tyr154, Thr209, and His327 contribute to the substrate site.

It belongs to the uroporphyrinogen decarboxylase family. As to quaternary structure, homodimer.

The protein localises to the cytoplasm. It catalyses the reaction uroporphyrinogen III + 4 H(+) = coproporphyrinogen III + 4 CO2. The protein operates within porphyrin-containing compound metabolism; protoporphyrin-IX biosynthesis; coproporphyrinogen-III from 5-aminolevulinate: step 4/4. Its function is as follows. Catalyzes the decarboxylation of four acetate groups of uroporphyrinogen-III to yield coproporphyrinogen-III. The polypeptide is Uroporphyrinogen decarboxylase (Salmonella typhi).